The chain runs to 210 residues: MAAARASLGRIFPESSILFLCDMQEKLRDRVLYFPQIVSMAARMLKVARILDVPVLLTEHYPQGLGPTVPELGAQGVRTMSKTSFSMVPPLQQELDKLPQLKSVLLCGIETQVCILNTALDLLDRGLQVHVAVDACSSQSEMNRLVALARMQHSGVFLSTSEALTLQLIKDAAHPQFKEIQKILKEPVPEIGLLGFFQGMNNPLLPNSRP.

Phosphoserine is present on Ser-7.

Belongs to the isochorismatase family. As to quaternary structure, interacts with CDKN2A.

The protein localises to the cytoplasm. It is found in the nucleus. The protein is Isochorismatase domain-containing protein 2 (Isoc2) of Rattus norvegicus (Rat).